The primary structure comprises 303 residues: Catechol 1,2-dioxygenase (303 aa).

Positions 156, 191, 215, and 217 each coordinate Fe cation.

As to quaternary structure, homodimer. Fe(3+) is required as a cofactor.

It catalyses the reaction catechol + O2 = cis,cis-muconate + 2 H(+). The protein operates within aromatic compound metabolism; beta-ketoadipate pathway; 5-oxo-4,5-dihydro-2-furylacetate from catechol: step 1/3. Inhibited by Ag(+), Cu(+), Hg(2+) and Pb(2+). Can cleave 4-methylcatechol at lower rates than catechol, but has no activity with 3-methylcatechol, 4-chlorocatechol, 4-carboxycatechol or hydroxyquinol. The sequence is that of Catechol 1,2-dioxygenase (HQD2) from Candida albicans (strain SC5314 / ATCC MYA-2876) (Yeast).